Here is a 331-residue protein sequence, read N- to C-terminus: GTP 3',8-cyclase (331 aa).

The region spanning Pro6 to Pro234 is the Radical SAM core domain. Arg15 lines the GTP pocket. Positions 22 and 26 each coordinate [4Fe-4S] cluster. An S-adenosyl-L-methionine-binding site is contributed by Tyr28. Cys29 contacts [4Fe-4S] cluster. GTP is bound at residue Arg66. Gly70 lines the S-adenosyl-L-methionine pocket. Ser97 is a GTP binding site. Ser121 lines the S-adenosyl-L-methionine pocket. Position 158 (Lys158) interacts with GTP. Met192 is a binding site for S-adenosyl-L-methionine. Residues Cys258 and Cys261 each contribute to the [4Fe-4S] cluster site. Position 263 to 265 (Arg263 to Arg265) interacts with GTP. Cys275 serves as a coordination point for [4Fe-4S] cluster.

It belongs to the radical SAM superfamily. MoaA family. In terms of assembly, monomer and homodimer. [4Fe-4S] cluster serves as cofactor.

The catalysed reaction is GTP + AH2 + S-adenosyl-L-methionine = (8S)-3',8-cyclo-7,8-dihydroguanosine 5'-triphosphate + 5'-deoxyadenosine + L-methionine + A + H(+). Its pathway is cofactor biosynthesis; molybdopterin biosynthesis. Functionally, catalyzes the cyclization of GTP to (8S)-3',8-cyclo-7,8-dihydroguanosine 5'-triphosphate. The sequence is that of GTP 3',8-cyclase from Hydrogenovibrio crunogenus (strain DSM 25203 / XCL-2) (Thiomicrospira crunogena).